Here is a 432-residue protein sequence, read N- to C-terminus: 3-phosphoshikimate 1-carboxyvinyltransferase (432 aa).

Residues K23, S24, and R28 each coordinate 3-phosphoshikimate. K23 is a phosphoenolpyruvate binding site. The phosphoenolpyruvate site is built by G95 and R123. 3-phosphoshikimate-binding residues include S167, Q169, D317, and K344. Q169 is a phosphoenolpyruvate binding site. The active-site Proton acceptor is D317. Phosphoenolpyruvate contacts are provided by R348 and R390.

Belongs to the EPSP synthase family. Monomer.

The protein localises to the cytoplasm. It carries out the reaction 3-phosphoshikimate + phosphoenolpyruvate = 5-O-(1-carboxyvinyl)-3-phosphoshikimate + phosphate. Its pathway is metabolic intermediate biosynthesis; chorismate biosynthesis; chorismate from D-erythrose 4-phosphate and phosphoenolpyruvate: step 6/7. Its function is as follows. Catalyzes the transfer of the enolpyruvyl moiety of phosphoenolpyruvate (PEP) to the 5-hydroxyl of shikimate-3-phosphate (S3P) to produce enolpyruvyl shikimate-3-phosphate and inorganic phosphate. The chain is 3-phosphoshikimate 1-carboxyvinyltransferase from Staphylococcus aureus (strain COL).